A 412-amino-acid polypeptide reads, in one-letter code: Serine hydroxymethyltransferase (412 aa).

(6S)-5,6,7,8-tetrahydrofolate is bound by residues leucine 117 and 121–123 (GHL). N6-(pyridoxal phosphate)lysine is present on lysine 226. 349 to 351 (SPF) lines the (6S)-5,6,7,8-tetrahydrofolate pocket.

It belongs to the SHMT family. As to quaternary structure, homodimer. Pyridoxal 5'-phosphate serves as cofactor.

The protein localises to the cytoplasm. The enzyme catalyses (6R)-5,10-methylene-5,6,7,8-tetrahydrofolate + glycine + H2O = (6S)-5,6,7,8-tetrahydrofolate + L-serine. Its pathway is one-carbon metabolism; tetrahydrofolate interconversion. It participates in amino-acid biosynthesis; glycine biosynthesis; glycine from L-serine: step 1/1. In terms of biological role, catalyzes the reversible interconversion of serine and glycine with tetrahydrofolate (THF) serving as the one-carbon carrier. This reaction serves as the major source of one-carbon groups required for the biosynthesis of purines, thymidylate, methionine, and other important biomolecules. Also exhibits THF-independent aldolase activity toward beta-hydroxyamino acids, producing glycine and aldehydes, via a retro-aldol mechanism. In Nitratidesulfovibrio vulgaris (strain DSM 19637 / Miyazaki F) (Desulfovibrio vulgaris), this protein is Serine hydroxymethyltransferase.